A 187-amino-acid chain; its full sequence is Elongation factor P (187 aa).

The protein belongs to the elongation factor P family.

It localises to the cytoplasm. It functions in the pathway protein biosynthesis; polypeptide chain elongation. Its function is as follows. Involved in peptide bond synthesis. Stimulates efficient translation and peptide-bond synthesis on native or reconstituted 70S ribosomes in vitro. Probably functions indirectly by altering the affinity of the ribosome for aminoacyl-tRNA, thus increasing their reactivity as acceptors for peptidyl transferase. This is Elongation factor P from Flavobacterium psychrophilum (strain ATCC 49511 / DSM 21280 / CIP 103535 / JIP02/86).